Reading from the N-terminus, the 499-residue chain is Glycerol kinase (499 aa).

Threonine 12 provides a ligand contact to ADP. Positions 12, 13, and 14 each coordinate ATP. Residue threonine 12 coordinates sn-glycerol 3-phosphate. Arginine 16 lines the ADP pocket. Sn-glycerol 3-phosphate-binding residues include arginine 82, glutamate 83, tyrosine 134, and aspartate 243. 5 residues coordinate glycerol: arginine 82, glutamate 83, tyrosine 134, aspartate 243, and glutamine 244. Residues threonine 265 and glycine 308 each contribute to the ADP site. Residues threonine 265, glycine 308, glutamine 312, and glycine 409 each contribute to the ATP site. Residues glycine 409 and asparagine 413 each coordinate ADP.

Belongs to the FGGY kinase family. As to quaternary structure, homotetramer and homodimer (in equilibrium).

The enzyme catalyses glycerol + ATP = sn-glycerol 3-phosphate + ADP + H(+). Its pathway is polyol metabolism; glycerol degradation via glycerol kinase pathway; sn-glycerol 3-phosphate from glycerol: step 1/1. Activated by phosphorylation and inhibited by fructose 1,6-bisphosphate (FBP). Key enzyme in the regulation of glycerol uptake and metabolism. Catalyzes the phosphorylation of glycerol to yield sn-glycerol 3-phosphate. In Lachnoclostridium phytofermentans (strain ATCC 700394 / DSM 18823 / ISDg) (Clostridium phytofermentans), this protein is Glycerol kinase.